The chain runs to 80 residues: Metallothionein-like protein type 2, MT2-22 (80 aa).

Belongs to the metallothionein superfamily. Type 15 family.

Its function is as follows. Metallothioneins have a high content of cysteine residues that bind various heavy metals. In Brassica juncea (Indian mustard), this protein is Metallothionein-like protein type 2, MT2-22.